The following is a 79-amino-acid chain: Short neurotoxin 7 (79 aa).

The signal sequence occupies residues 1-21 (MKTLLLTLVMVTIMCLDLGYT). Intrachain disulfides connect cysteine 24–cysteine 41, cysteine 34–cysteine 59, cysteine 63–cysteine 71, and cysteine 72–cysteine 77.

It belongs to the three-finger toxin family. Short-chain subfamily. Type III alpha-neurotoxin sub-subfamily. In terms of tissue distribution, expressed by the venom gland.

Its subcellular location is the secreted. Functionally, binds with high affinity to muscle nicotinic acetylcholine receptor (nAChR) and hinders acetylcholine binding to the receptor, thereby impairing neuromuscular transmission. Competes with the binding of alpha-bungarotoxin on muscle AChR (from Torpedo) (IC(50)=0.30 uM). In vivo, causes muscle paralysis, spasms and increased respiration. The polypeptide is Short neurotoxin 7 (Pseudonaja textilis (Eastern brown snake)).